Consider the following 391-residue polypeptide: 1-deoxy-D-xylulose 5-phosphate reductoisomerase (391 aa).

NADPH-binding residues include Thr-17, Gly-18, Ser-19, Ile-20, Asn-47, and Asn-130. Residue Lys-131 coordinates 1-deoxy-D-xylulose 5-phosphate. NADPH is bound at residue Glu-132. Asp-156 lines the Mn(2+) pocket. 4 residues coordinate 1-deoxy-D-xylulose 5-phosphate: Ser-157, Glu-158, Ser-182, and His-205. Glu-158 is a binding site for Mn(2+). Residue Gly-211 participates in NADPH binding. Ser-218, Asn-223, Lys-224, and Glu-227 together coordinate 1-deoxy-D-xylulose 5-phosphate. Glu-227 is a Mn(2+) binding site.

It belongs to the DXR family. It depends on Mg(2+) as a cofactor. Mn(2+) serves as cofactor.

It catalyses the reaction 2-C-methyl-D-erythritol 4-phosphate + NADP(+) = 1-deoxy-D-xylulose 5-phosphate + NADPH + H(+). Its pathway is isoprenoid biosynthesis; isopentenyl diphosphate biosynthesis via DXP pathway; isopentenyl diphosphate from 1-deoxy-D-xylulose 5-phosphate: step 1/6. Functionally, catalyzes the NADPH-dependent rearrangement and reduction of 1-deoxy-D-xylulose-5-phosphate (DXP) to 2-C-methyl-D-erythritol 4-phosphate (MEP). This is 1-deoxy-D-xylulose 5-phosphate reductoisomerase from Sinorhizobium fredii (strain NBRC 101917 / NGR234).